The primary structure comprises 184 residues: Photosystem I assembly protein Ycf4 (184 aa).

The next 2 helical transmembrane spans lie at 19–39 (ISNFCWAFILFLGSLGFLLVG) and 57–77 (IVFFPQGIVMSFYGIAGLFIS).

It belongs to the Ycf4 family.

The protein localises to the plastid. It localises to the chloroplast thylakoid membrane. Seems to be required for the assembly of the photosystem I complex. The chain is Photosystem I assembly protein Ycf4 from Nicotiana tomentosiformis (Tobacco).